The chain runs to 778 residues: Molybdenum cofactor sulfurase (778 aa).

Lys235 bears the N6-(pyridoxal phosphate)lysine mark. Cys399 is a catalytic residue. Disordered stretches follow at residues 576–596 (LSKN…SRVC) and 654–673 (ARPA…DTEK). Positions 584-594 (RSSSSRSRSSR) are enriched in low complexity. Positions 651–778 (LPTARPALPG…ETAERARSRL (128 aa)) constitute an MOSC domain.

This sequence belongs to the class-V pyridoxal-phosphate-dependent aminotransferase family. MOCOS subfamily. Pyridoxal 5'-phosphate is required as a cofactor.

It catalyses the reaction Mo-molybdopterin + L-cysteine + AH2 = thio-Mo-molybdopterin + L-alanine + A + H2O. Its pathway is cofactor biosynthesis; molybdopterin biosynthesis. In terms of biological role, sulfurates the molybdenum cofactor. Sulfation of molybdenum is essential for xanthine dehydrogenase (XDH) and aldehyde oxidase (ADO) enzymes in which molybdenum cofactor is liganded by 1 oxygen and 1 sulfur atom in active form. In Chaetomium globosum (strain ATCC 6205 / CBS 148.51 / DSM 1962 / NBRC 6347 / NRRL 1970) (Soil fungus), this protein is Molybdenum cofactor sulfurase.